We begin with the raw amino-acid sequence, 815 residues long: Lon protease 1 (815 aa).

The Lon N-terminal domain occupies valine 12–isoleucine 205. Position 358–365 (glycine 358–threonine 365) interacts with ATP. Residues threonine 594–serine 775 enclose the Lon proteolytic domain. Residues serine 681 and lysine 724 contribute to the active site.

The protein belongs to the peptidase S16 family. Homohexamer. Organized in a ring with a central cavity.

It localises to the cytoplasm. The catalysed reaction is Hydrolysis of proteins in presence of ATP.. ATP-dependent serine protease that mediates the selective degradation of mutant and abnormal proteins as well as certain short-lived regulatory proteins. Required for cellular homeostasis and for survival from DNA damage and developmental changes induced by stress. Degrades polypeptides processively to yield small peptide fragments that are 5 to 10 amino acids long. Binds to DNA in a double-stranded, site-specific manner. This is Lon protease 1 from Hydrogenovibrio crunogenus (strain DSM 25203 / XCL-2) (Thiomicrospira crunogena).